A 197-amino-acid chain; its full sequence is Ribonuclease HII (197 aa).

The region spanning 11-197 (HLIAGVDEVG…FAPVKKILGL (187 aa)) is the RNase H type-2 domain. 3 residues coordinate a divalent metal cation: D17, E18, and D109.

It belongs to the RNase HII family. It depends on Mn(2+) as a cofactor. Requires Mg(2+) as cofactor.

The protein localises to the cytoplasm. The enzyme catalyses Endonucleolytic cleavage to 5'-phosphomonoester.. Endonuclease that specifically degrades the RNA of RNA-DNA hybrids. The polypeptide is Ribonuclease HII (Actinobacillus pleuropneumoniae serotype 7 (strain AP76)).